A 766-amino-acid polypeptide reads, in one-letter code: MEESEQVLPLLTNPKDLTNPSYASSSSSSSEPRDETEDLLLPISDENEEEEEENSPIRQVALTVPTTDDPSLPVLTFRMWVLGTLSCILLSFLNQFFWYRTEPLTISAISAQIAVVPLGRLMAAKITDRVFFQGSKWQFTLNPGPFNVKEHVLITIFANAGAGSVYAIHVVTVVKAFYMKNITFFVSFIVIVTTQVLGFGWAGIFRKYLVEPAAMWWPANLVQVSLFRALHEKEERTKGGLTRTQFFVIAFVCSFAYYVFPGYLFQIMTSLSWVCWFFPSSVMAQQIGSGLHGLGVGAIGLDWSTISSYLGSPLASPWFATANVGVGFVLVIYVLVPICYWLDVYKAKTFPIFSSSLFSSQGSKYNITSIIDSNFHLDLPAYERQGPLYLCTFFAISYGVGFAALSATIMHVALFHGREIWEQSKESFKEKKLDVHARLMQRYKQVPEWWFWCILVTNVGATIFACEYYNDQLQLPWWGVLLACTVAIIFTLPIGIITAITNQAPGLNIITEYIIGYIYPGYPVANMCFKVYGYISMQQAITFLQDFKLGHYMKIPPRTMFMAQIVGTLISCFVYLTTAWWLMETIPNICDSVTNSVWTCPSDKVFYDASVIWGLIGPRRIFGDLGLYKSVNWFFLVGAIAPILVWLASRMFPRQEWIKLINMPVLISATSSMPPATAVNYTTWVLAGFLSGFVVFRYRPNLWQRYNYVLSGALDAGLAFMGVLLYMCLGLENVSLDWWGNELDGCPLASCPTAPGIIVEGCPLYT.

The interval 1 to 58 (MEESEQVLPLLTNPKDLTNPSYASSSSSSSEPRDETEDLLLPISDENEEEEEENSPIR) is disordered. A compositionally biased stretch (acidic residues) spans 45-54 (DENEEEEEEN). A run of 15 helical transmembrane segments spans residues 79 to 99 (MWVL…FFWY), 104 to 124 (LTIS…LMAA), 154 to 174 (ITIF…VTVV), 184 to 204 (FFVS…WAGI), 247 to 267 (FVIA…LFQI), 287 to 307 (IGSG…STIS), 324 to 344 (VGVG…WLDV), 390 to 410 (LCTF…ATIM), 446 to 466 (VPEW…IFAC), 477 to 497 (WWGV…IGII), 509 to 529 (IITE…NMCF), 561 to 581 (FMAQ…TAWW), 627 to 647 (LYKS…LVWL), 676 to 696 (ATAV…FVVF), and 709 to 729 (VLSG…YMCL).

It belongs to the oligopeptide OPT transporter (TC 2.A.67.1) family. As to expression, expressed in the major and the first-order veins and in the hydathodes of the leaves. In the roots, expressed in circular zones surrounding lateral root primordia and in some part of the root epidermis. Expressed also in the sepals and the cortical tissues of the stem, but not in the conducting bundles, the petals or the reproductive tissues.

It is found in the membrane. In terms of biological role, involved in the translocation of tetra- and pentapeptides across the cellular membrane in an energy-dependent manner. May also transport cadmium complexes. The polypeptide is Oligopeptide transporter 7 (OPT7) (Arabidopsis thaliana (Mouse-ear cress)).